The sequence spans 89 residues: Small ribosomal subunit protein uS15 (89 aa).

The protein belongs to the universal ribosomal protein uS15 family. As to quaternary structure, part of the 30S ribosomal subunit. Forms a bridge to the 50S subunit in the 70S ribosome, contacting the 23S rRNA.

In terms of biological role, one of the primary rRNA binding proteins, it binds directly to 16S rRNA where it helps nucleate assembly of the platform of the 30S subunit by binding and bridging several RNA helices of the 16S rRNA. Functionally, forms an intersubunit bridge (bridge B4) with the 23S rRNA of the 50S subunit in the ribosome. The chain is Small ribosomal subunit protein uS15 from Hahella chejuensis (strain KCTC 2396).